Consider the following 319-residue polypeptide: Lipoyl synthase (319 aa).

Positions 66, 71, 77, 92, 96, 99, and 305 each coordinate [4Fe-4S] cluster. The 217-residue stretch at 78–294 (FNRGTATFMI…KKEALSIGFT (217 aa)) folds into the Radical SAM core domain.

This sequence belongs to the radical SAM superfamily. Lipoyl synthase family. Requires [4Fe-4S] cluster as cofactor.

Its subcellular location is the cytoplasm. The catalysed reaction is [[Fe-S] cluster scaffold protein carrying a second [4Fe-4S](2+) cluster] + N(6)-octanoyl-L-lysyl-[protein] + 2 oxidized [2Fe-2S]-[ferredoxin] + 2 S-adenosyl-L-methionine + 4 H(+) = [[Fe-S] cluster scaffold protein] + N(6)-[(R)-dihydrolipoyl]-L-lysyl-[protein] + 4 Fe(3+) + 2 hydrogen sulfide + 2 5'-deoxyadenosine + 2 L-methionine + 2 reduced [2Fe-2S]-[ferredoxin]. It functions in the pathway protein modification; protein lipoylation via endogenous pathway; protein N(6)-(lipoyl)lysine from octanoyl-[acyl-carrier-protein]: step 2/2. Its function is as follows. Catalyzes the radical-mediated insertion of two sulfur atoms into the C-6 and C-8 positions of the octanoyl moiety bound to the lipoyl domains of lipoate-dependent enzymes, thereby converting the octanoylated domains into lipoylated derivatives. This chain is Lipoyl synthase, found in Buchnera aphidicola subsp. Schizaphis graminum (strain Sg).